Consider the following 624-residue polypeptide: MSDNQSWNSSGSEEDPETESGPPVERCGVLSKWTNYIHGWQDRWVVLKNNALSYYKSEDETEYGCRGSICLSKAVITPHDFDECRFDISVNDSVWYLRAQDPDHRQQWIDAIEQHKTESGYGSESSLRRHGSMVSLVSGASGYSATSTSSFKKGHSLREKLAEMETFRDILCRQVDTLQKYFDACADAVSKDELQRDKVVEDDEDDFPTTRSDGDFLHSTNGNKEKLFPHVTPKGINGIDFKGEAITFKATTAGILATLSHCIELMVKREDSWQKRLDKETEKKRRTEEAYKNAMTELKKKSHFGGPDYEEGPNSLINEEEFFDAVEAALDRQDKIEEQSQSEKVRLHWPTSLPSGDAFSSVGTHRFVQKPYSRSSSMSSIDLVSASDDVHRFSSQVEEMVQNHMTYSLQDVGGDANWQLVVEEGEMKVYRREVEENGIVLDPLKATHAVKGVTGHEVCNYFWNVDVRNDWETTIENFHVVETLADNAIIIYQTHKRVWPASQRDVLYLSVIRKIPALTENDPETWIVCNFSVDHDSAPLNNRCVRAKINVAMICQTLVSPPEGNQEISRDNILCKITYVANVNPGGWAPASVLRAVAKREYPKFLKRFTSYVQEKTAGKPILF.

Over residues 1–11 (MSDNQSWNSSG) the composition is skewed to polar residues. Residues 1 to 24 (MSDNQSWNSSGSEEDPETESGPPV) form a disordered region. The PH domain maps to 23-117 (PVERCGVLSK…WIDAIEQHKT (95 aa)). Phosphoserine is present on S126. At S132 the chain carries Phosphoserine; by PKD. S135 carries the phosphoserine modification. Residues 263–303 (IELMVKREDSWQKRLDKETEKKRRTEEAYKNAMTELKKKSH) adopt a coiled-coil conformation. S315 bears the Phosphoserine mark. The FFAT signature appears at 321–327 (EFFDAVE). Y372 carries the phosphotyrosine modification. Phosphoserine occurs at positions 373, 377, and 380. One can recognise an START domain in the interval 389–618 (DVHRFSSQVE…FTSYVQEKTA (230 aa)). Positions 472, 493, 530, and 579 each coordinate an N-acylsphing-4-enine.

Interacts with VAPA and VAPB. Interaction with VAPB is less efficient than with VAPA. Interacts (via FFAT motif) with MOSPD2 (via MSP domain). Phosphorylation on Ser-132 decreases the affinity toward phosphatidylinositol 4-phosphate at Golgi membranes and reduces ceramide transfer activity. Inactivated by hyperphosphorylation of serine residues by CSNK1G2/CK1 that triggers dissociation from the Golgi complex, thus down-regulating ER-to-Golgi transport of ceramide and sphingomyelin synthesis. In terms of tissue distribution, widely expressed.

It localises to the cytoplasm. It is found in the golgi apparatus. The protein localises to the endoplasmic reticulum. It carries out the reaction N-hexadecanoylsphing-4-enine(in) = N-hexadecanoylsphing-4-enine(out). Functionally, shelters ceramides and diacylglycerol lipids inside its START domain and mediates the intracellular trafficking of ceramides and diacylglycerol lipids in a non-vesicular manner. The polypeptide is Ceramide transfer protein (Homo sapiens (Human)).